A 382-amino-acid chain; its full sequence is Succinate--CoA ligase [ADP-forming] subunit beta (382 aa).

In terms of domain architecture, ATP-grasp spans K9–Y240. Residues K45, G52–G54, L94, and E99 each bind ATP. Residues N193 and D207 each coordinate Mg(2+). Substrate-binding positions include N260 and G317 to T319.

It belongs to the succinate/malate CoA ligase beta subunit family. In terms of assembly, heterotetramer of two alpha and two beta subunits. Requires Mg(2+) as cofactor.

The enzyme catalyses succinate + ATP + CoA = succinyl-CoA + ADP + phosphate. It carries out the reaction GTP + succinate + CoA = succinyl-CoA + GDP + phosphate. The protein operates within carbohydrate metabolism; tricarboxylic acid cycle; succinate from succinyl-CoA (ligase route): step 1/1. Succinyl-CoA synthetase functions in the citric acid cycle (TCA), coupling the hydrolysis of succinyl-CoA to the synthesis of either ATP or GTP and thus represents the only step of substrate-level phosphorylation in the TCA. The beta subunit provides nucleotide specificity of the enzyme and binds the substrate succinate, while the binding sites for coenzyme A and phosphate are found in the alpha subunit. This is Succinate--CoA ligase [ADP-forming] subunit beta from Pyrobaculum calidifontis (strain DSM 21063 / JCM 11548 / VA1).